The following is a 96-amino-acid chain: NADH-ubiquinone oxidoreductase chain 4L (96 aa).

Transmembrane regions (helical) follow at residues 2 to 22 (IMIL…FCFV), 28 to 48 (LLSM…MLFI), and 62 to 82 (MFLT…VSMI).

The protein belongs to the complex I subunit 4L family.

It localises to the mitochondrion membrane. The enzyme catalyses a ubiquinone + NADH + 5 H(+)(in) = a ubiquinol + NAD(+) + 4 H(+)(out). In terms of biological role, core subunit of the mitochondrial membrane respiratory chain NADH dehydrogenase (Complex I) that is believed to belong to the minimal assembly required for catalysis. Complex I functions in the transfer of electrons from NADH to the respiratory chain. The immediate electron acceptor for the enzyme is believed to be ubiquinone. This is NADH-ubiquinone oxidoreductase chain 4L (mt:ND4L) from Drosophila melanogaster (Fruit fly).